Consider the following 230-residue polypeptide: Large ribosomal subunit protein uL3 (230 aa).

2 disordered regions span residues 125–149 and 210–230; these read QAIG…SLGD and PNPK…VKNE.

It belongs to the universal ribosomal protein uL3 family. In terms of assembly, part of the 50S ribosomal subunit. Forms a cluster with proteins L14 and L19.

In terms of biological role, one of the primary rRNA binding proteins, it binds directly near the 3'-end of the 23S rRNA, where it nucleates assembly of the 50S subunit. This Mesomycoplasma hyopneumoniae (strain J / ATCC 25934 / NCTC 10110) (Mycoplasma hyopneumoniae) protein is Large ribosomal subunit protein uL3.